The primary structure comprises 1793 residues: Chitin synthase 5 (1793 aa).

The tract at residues 1 to 28 (MTNPRMSMYSLASEAPGGNRGTGQQSTQ) is disordered. N-linked (GlcNAc...) asparagine glycans are attached at residues Asn70, Asn164, Asn638, Asn664, and Asn669. Helical transmembrane passes span 750–770 (VWVF…LRYV) and 786–806 (LVLC…IVAF). A Cytochrome b5 heme-binding domain is found at 815 to 877 (DKAYSQKEVD…GMNLDDYFVA (63 aa)). N-linked (GlcNAc...) asparagine glycosylation is found at Asn897, Asn1019, and Asn1023. Residues 1056–1076 (LLLAFSIMLCAVILLKFVSAL) traverse the membrane as a helical segment. An N-linked (GlcNAc...) asparagine glycan is attached at Asn1421. Helical transmembrane passes span 1452 to 1472 (LFGT…IYLV), 1479 to 1499 (FPLI…LIFI), and 1507 to 1527 (IGWM…LPIY). Asn1534 and Asn1705 each carry an N-linked (GlcNAc...) asparagine glycan. Positions 1735–1791 (GPDDGMIVEAIRTVLMEVDLDTVTKKQVRALVEQRLQSELVGERRTFMDRQIDHELA) constitute a DEK-C domain.

It belongs to the chitin synthase family. Class V subfamily.

It is found in the cell membrane. It carries out the reaction [(1-&gt;4)-N-acetyl-beta-D-glucosaminyl](n) + UDP-N-acetyl-alpha-D-glucosamine = [(1-&gt;4)-N-acetyl-beta-D-glucosaminyl](n+1) + UDP + H(+). Polymerizes chitin, a structural polymer of the cell wall and septum, by transferring the sugar moiety of UDP-GlcNAc to the non-reducing end of the growing chitin polymer. Regulates Germination and Tolerance to Hyperosmotic Stress. Plays a key role in pathogenicity. Likely contributes to post-penetration virulence. This is Chitin synthase 5 from Verticillium dahliae (strain VdLs.17 / ATCC MYA-4575 / FGSC 10137) (Verticillium wilt).